Consider the following 947-residue polypeptide: Serine/threonine-protein kinase PKH2 (947 aa).

Residues 1–14 (MHKFRYSLHQHYSK) show a composition bias toward basic residues. 3 disordered regions span residues 1–43 (MHKF…SSSS), 108–132 (SLGN…LSSH), and 162–212 (FNHL…NEEN). The span at 108-117 (SLGNTTNETG) shows a compositional bias: polar residues. A compositionally biased stretch (acidic residues) spans 187-198 (NTEEEENNDDTD). Basic and acidic residues predominate over residues 199-212 (EIPKSETLKQNEEN). Residues 240–502 (FKFGKELGEG…IPEIQKHYFF (263 aa)) enclose the Protein kinase domain. Residues 250-252 (SYS) and K269 each bind ATP. The PIF-pocket stretch occupies residues 271 to 316 (LDKRHIIKEKKVKYVNIEKHALNRLSNRLGVISLYFTFQDKDSLYF). ATP-binding positions include 319–321 (DYA) and E325. D364 acts as the Proton acceptor in catalysis. Residues E368 and D382 each coordinate ATP. 2 stretches are compositionally biased toward low complexity: residues 550–579 (VKKS…KGSS) and 618–632 (SSTS…SNSN). 4 disordered regions span residues 550 to 598 (VKKS…STEK), 611 to 644 (KPAT…QQDY), 660 to 686 (SVGS…IHQQ), and 794 to 816 (NMKR…ASTS). Over residues 802-811 (DSKKSMDIER) the composition is skewed to basic and acidic residues.

This sequence belongs to the protein kinase superfamily. AGC Ser/Thr protein kinase family. PDPK1 subfamily.

Its subcellular location is the nucleus. The protein localises to the cytoplasm. It is found in the cell cortex. It catalyses the reaction L-seryl-[protein] + ATP = O-phospho-L-seryl-[protein] + ADP + H(+). It carries out the reaction L-threonyl-[protein] + ATP = O-phospho-L-threonyl-[protein] + ADP + H(+). Serine/threonine-protein kinase which is part sphingolipid-mediated signaling pathway that is required for the internalization step of endocytosis by regulating eisosome assembly and organization, and modulating the organization of the plasma membrane. Phosphorylates and activates PKC1. Activates YPK1 and YPK2, 2 components of signaling cascade required for maintenance of cell wall integrity. Required for stress-induced P-body assembly and regulates global mRNA decay at the deadenylation step. This chain is Serine/threonine-protein kinase PKH2, found in Candida albicans (strain SC5314 / ATCC MYA-2876) (Yeast).